A 552-amino-acid polypeptide reads, in one-letter code: Arginine--tRNA ligase (552 aa).

The short motif at 123 to 133 is the 'HIGH' region element; that stretch reads ANPTGPLTIGR.

It belongs to the class-I aminoacyl-tRNA synthetase family. As to quaternary structure, monomer.

The protein localises to the cytoplasm. It catalyses the reaction tRNA(Arg) + L-arginine + ATP = L-arginyl-tRNA(Arg) + AMP + diphosphate. The sequence is that of Arginine--tRNA ligase from Chlorobium luteolum (strain DSM 273 / BCRC 81028 / 2530) (Pelodictyon luteolum).